A 107-amino-acid polypeptide reads, in one-letter code: Thiosulfate sulfurtransferase GlpE (107 aa).

One can recognise a Rhodanese domain in the interval lysine 16 to alanine 104. Cysteine 64 serves as the catalytic Cysteine persulfide intermediate.

This sequence belongs to the GlpE family.

It localises to the cytoplasm. The enzyme catalyses thiosulfate + hydrogen cyanide = thiocyanate + sulfite + 2 H(+). The catalysed reaction is thiosulfate + [thioredoxin]-dithiol = [thioredoxin]-disulfide + hydrogen sulfide + sulfite + 2 H(+). Functionally, transferase that catalyzes the transfer of sulfur from thiosulfate to thiophilic acceptors such as cyanide or dithiols. May function in a CysM-independent thiosulfate assimilation pathway by catalyzing the conversion of thiosulfate to sulfite, which can then be used for L-cysteine biosynthesis. In Coxiella burnetii (strain CbuK_Q154) (Coxiella burnetii (strain Q154)), this protein is Thiosulfate sulfurtransferase GlpE.